A 600-amino-acid polypeptide reads, in one-letter code: uncharacterized protein (600 aa).

2 consecutive 4Fe-4S ferredoxin-type domains span residues 14–44 (RLAI…MGEK) and 53–82 (GKPV…IIGL). ABC transporter domains follow at residues 77 to 318 (ISII…YLYG) and 348 to 563 (LLSY…LKEM). Residues 117–124 (GQNGIGKS) and 380–387 (GPNGIGKT) contribute to the ATP site. The span at 569 to 594 (RDPETGRPRANKEGSQRDIMQKEKGE) shows a compositional bias: basic and acidic residues. Positions 569-600 (RDPETGRPRANKEGSQRDIMQKEKGEYYYVDE) are disordered.

The protein belongs to the ABC transporter superfamily.

This is an uncharacterized protein from Methanocaldococcus jannaschii (strain ATCC 43067 / DSM 2661 / JAL-1 / JCM 10045 / NBRC 100440) (Methanococcus jannaschii).